A 366-amino-acid polypeptide reads, in one-letter code: NADH-quinone oxidoreductase subunit H (366 aa).

Helical transmembrane passes span 27 to 47 (LLLI…LTFA), 99 to 119 (FLFL…WAVV), 134 to 154 (LLYI…AGWA), 168 to 188 (AAQV…VLMM), 206 to 226 (FLNW…ISGV), 268 to 288 (ILVA…PVDI), 294 to 314 (IPGM…FLWF), and 329 to 349 (LGWK…GMVM).

It belongs to the complex I subunit 1 family. NDH-1 is composed of 14 different subunits. Subunits NuoA, H, J, K, L, M, N constitute the membrane sector of the complex.

It localises to the cell inner membrane. The catalysed reaction is a quinone + NADH + 5 H(+)(in) = a quinol + NAD(+) + 4 H(+)(out). NDH-1 shuttles electrons from NADH, via FMN and iron-sulfur (Fe-S) centers, to quinones in the respiratory chain. The immediate electron acceptor for the enzyme in this species is believed to be ubiquinone. Couples the redox reaction to proton translocation (for every two electrons transferred, four hydrogen ions are translocated across the cytoplasmic membrane), and thus conserves the redox energy in a proton gradient. This subunit may bind ubiquinone. This Nitrosomonas europaea (strain ATCC 19718 / CIP 103999 / KCTC 2705 / NBRC 14298) protein is NADH-quinone oxidoreductase subunit H.